A 254-amino-acid polypeptide reads, in one-letter code: Ubiquinone biosynthesis O-methyltransferase (254 aa).

S-adenosyl-L-methionine is bound by residues arginine 47, glycine 78, aspartate 99, and methionine 141.

It belongs to the methyltransferase superfamily. UbiG/COQ3 family.

The enzyme catalyses a 3-demethylubiquinol + S-adenosyl-L-methionine = a ubiquinol + S-adenosyl-L-homocysteine + H(+). It catalyses the reaction a 3-(all-trans-polyprenyl)benzene-1,2-diol + S-adenosyl-L-methionine = a 2-methoxy-6-(all-trans-polyprenyl)phenol + S-adenosyl-L-homocysteine + H(+). Its pathway is cofactor biosynthesis; ubiquinone biosynthesis. In terms of biological role, O-methyltransferase that catalyzes the 2 O-methylation steps in the ubiquinone biosynthetic pathway. In Rhodopseudomonas palustris (strain BisB18), this protein is Ubiquinone biosynthesis O-methyltransferase.